We begin with the raw amino-acid sequence, 490 residues long: Bifunctional IPC transferase and DIPP synthase (490 aa).

Positions 72–290 are mobA-like NTP transferase; that stretch reads LMKAVILAAG…RANRALVSAA (219 aa). Residues 78–80, lysine 91, aspartate 144, and glutamate 180 each bind CTP; that span reads LAA. Glutamate 180 provides a ligand contact to Mg(2+). The tract at residues 291–490 is CDP-alcohol phosphatidyltransferases; the sequence is VKGSGDGFIS…VTLLAVLVSK (200 aa). 4 consecutive transmembrane segments (helical) span residues 329–349, 389–409, 447–467, and 468–488; these read FLVG…AGLL, FLAI…FAIF, IFLI…IFWM, and FLFV…AVLV.

This sequence in the N-terminal section; belongs to the MobA family. The protein in the C-terminal section; belongs to the CDP-alcohol phosphatidyltransferase class-I family. In terms of assembly, forms a mixture of monomers and dimers in solution, with prevalence of the monomeric form. Requires Mg(2+) as cofactor.

Its subcellular location is the membrane. It carries out the reaction 1D-myo-inositol 3-phosphate + CTP + H(+) = CDP-1L-myo-inositol + diphosphate. The enzyme catalyses CDP-1L-myo-inositol + 1D-myo-inositol 3-phosphate = bis(1L-myo-inositol) 3,1'-phosphate 1-phosphate + CMP + H(+). Involved in biosynthesis of di-myo-inositol phosphate (DIP), a widespread organic solute in microorganisms adapted to hot environments. Catalyzes the condensation of CTP and L-myo-inositol-1-phosphate into CDP-L-myo-inositol, as well as the biosynthesis of di-myo-inositol-1,3'-phosphate-1'-phosphate (DIPP) from CDP-L-myo-inositol and L-myo-inositol-1-phosphate. The cytidylyltransferase is absolutely specific for CTP and L-myo-inositol-1-P. The DIPP synthase uses only L-myoinositol-1-phosphate as an alcohol acceptor, but CDP-glycerol, as well as CDP-L-myo-inositol and CDP-D-myoinositol, are recognized as alcohol donors. In Archaeoglobus fulgidus (strain ATCC 49558 / DSM 4304 / JCM 9628 / NBRC 100126 / VC-16), this protein is Bifunctional IPC transferase and DIPP synthase.